The chain runs to 82 residues: Small ribosomal subunit protein bS18 (82 aa).

A disordered region spans residues 1–20 (MSEINQTVTRRPFHRRRKTC).

It belongs to the bacterial ribosomal protein bS18 family. As to quaternary structure, part of the 30S ribosomal subunit. Forms a tight heterodimer with protein bS6.

In terms of biological role, binds as a heterodimer with protein bS6 to the central domain of the 16S rRNA, where it helps stabilize the platform of the 30S subunit. This is Small ribosomal subunit protein bS18 from Bartonella quintana (strain Toulouse) (Rochalimaea quintana).